The chain runs to 171 residues: Ponticulin-like protein F (171 aa).

The first 20 residues, 1 to 20, serve as a signal peptide directing secretion; the sequence is MKFIPALIIFVFTIFALTNS. Gly-149 carries GPI-like-anchor amidated glycine lipidation. Positions 150-171 are cleaved as a propeptide — removed in mature form; that stretch reads TSSTIVIPFALILSLLLSVITL.

The protein belongs to the ponticulin family. Post-translationally, the GPI-like-anchor contains a phosphoceramide group, rather than a phosphatidyl group.

The protein resides in the cell membrane. The protein is Ponticulin-like protein F (ponF) of Dictyostelium discoideum (Social amoeba).